Reading from the N-terminus, the 821-residue chain is DNA replication licensing factor MCM6 (821 aa).

Methionine 1 is modified (N-acetylmethionine). Residues serine 13, serine 219, and serine 271 each carry the phosphoserine modification. Threonine 278 is subject to Phosphothreonine. The region spanning leucine 346–valine 553 is the MCM domain. Residues histidine 359, serine 399, threonine 400, alanine 401, lysine 402, serine 403, and asparagine 504 each contribute to the ATP site. Residues serine 528–aspartate 531 carry the Arginine finger motif. 2 residues coordinate ADP: arginine 619 and glutamate 622. Lysine 643 carries the N6-acetyllysine modification. Residues threonine 676 to valine 708 form a disordered region. Phosphoserine is present on residues serine 689, serine 704, and serine 762. Over residues phenylalanine 696 to valine 708 the composition is skewed to polar residues. Threonine 791 carries the phosphothreonine modification.

It belongs to the MCM family. Component of the MCM2-7 complex. The complex forms a toroidal hexameric ring with the proposed subunit order MCM2-MCM6-MCM4-MCM7-MCM3-MCM5. Component of the CMG helicase complex, a hexameric ring of related MCM2-7 subunits stabilized by CDC45 and the tetrameric GINS complex. May interact with MCM10. Interacts with TIPIN. Interacts with CDT1. Interacts with MCMBP. Interacts with DDI2. In terms of processing, O-glycosylated (O-GlcNAcylated), in a cell cycle-dependent manner.

It localises to the nucleus. The protein resides in the chromosome. It carries out the reaction ATP + H2O = ADP + phosphate + H(+). Acts as a component of the MCM2-7 complex (MCM complex) which is the replicative helicase essential for 'once per cell cycle' DNA replication initiation and elongation in eukaryotic cells. Core component of CDC45-MCM-GINS (CMG) helicase, the molecular machine that unwinds template DNA during replication, and around which the replisome is built. The active ATPase sites in the MCM2-7 ring are formed through the interaction surfaces of two neighboring subunits such that a critical structure of a conserved arginine finger motif is provided in trans relative to the ATP-binding site of the Walker A box of the adjacent subunit. The six ATPase active sites, however, are likely to contribute differentially to the complex helicase activity. This chain is DNA replication licensing factor MCM6 (Mcm6), found in Mus musculus (Mouse).